The sequence spans 367 residues: Aminomethyltransferase (367 aa).

This sequence belongs to the GcvT family. In terms of assembly, the glycine cleavage system is composed of four proteins: P, T, L and H.

The enzyme catalyses N(6)-[(R)-S(8)-aminomethyldihydrolipoyl]-L-lysyl-[protein] + (6S)-5,6,7,8-tetrahydrofolate = N(6)-[(R)-dihydrolipoyl]-L-lysyl-[protein] + (6R)-5,10-methylene-5,6,7,8-tetrahydrofolate + NH4(+). Functionally, the glycine cleavage system catalyzes the degradation of glycine. The polypeptide is Aminomethyltransferase (Parasynechococcus marenigrum (strain WH8102)).